The following is a 433-amino-acid chain: Serine hydroxymethyltransferase (433 aa).

Residues Leu133 and 137 to 139 (GHL) each bind (6S)-5,6,7,8-tetrahydrofolate. Lys242 carries the N6-(pyridoxal phosphate)lysine modification. 366–368 (SPF) is a (6S)-5,6,7,8-tetrahydrofolate binding site.

This sequence belongs to the SHMT family. As to quaternary structure, homodimer. Pyridoxal 5'-phosphate is required as a cofactor.

The protein localises to the cytoplasm. It catalyses the reaction (6R)-5,10-methylene-5,6,7,8-tetrahydrofolate + glycine + H2O = (6S)-5,6,7,8-tetrahydrofolate + L-serine. The protein operates within one-carbon metabolism; tetrahydrofolate interconversion. It participates in amino-acid biosynthesis; glycine biosynthesis; glycine from L-serine: step 1/1. Its function is as follows. Catalyzes the reversible interconversion of serine and glycine with tetrahydrofolate (THF) serving as the one-carbon carrier. This reaction serves as the major source of one-carbon groups required for the biosynthesis of purines, thymidylate, methionine, and other important biomolecules. Also exhibits THF-independent aldolase activity toward beta-hydroxyamino acids, producing glycine and aldehydes, via a retro-aldol mechanism. In Beijerinckia indica subsp. indica (strain ATCC 9039 / DSM 1715 / NCIMB 8712), this protein is Serine hydroxymethyltransferase.